We begin with the raw amino-acid sequence, 222 residues long: Probable mitochondrial import inner membrane translocase subunit Tim17 3 (222 aa).

3 consecutive transmembrane segments (helical) span residues 16-36 (CGCAFMMGTIGGSLFEFLKGF), 60-80 (SIAGSFAVWGATFSTVDCALV), and 115-135 (ALVGCLVLAMIEGAGAAVATI).

It belongs to the Tim17/Tim22/Tim23 family. In terms of assembly, component of the TIM23 complex at least composed of Tim23, Tim17 (Tim17a1, Tim17a2 or Tim17b1) and a Tim50. The complex interacts with the Tim44 component of the PAM complex.

It is found in the mitochondrion inner membrane. Its function is as follows. Essential component of the TIM23 complex, a complex that mediates the translocation of transit peptide-containing proteins across the mitochondrial inner membrane. The polypeptide is Probable mitochondrial import inner membrane translocase subunit Tim17 3 (Tim17a1) (Drosophila melanogaster (Fruit fly)).